Here is a 374-residue protein sequence, read N- to C-terminus: DNA-directed RNA polymerase subunit alpha (374 aa).

Residues 1-257 are alpha N-terminal domain (alpha-NTD); sequence MSDNAHNLLY…KHFSIFENMD (257 aa). The segment at 274–374 is alpha C-terminal domain (alpha-CTD); sequence KDDILHKLIL…EKIRAKNIKG (101 aa).

The protein belongs to the RNA polymerase alpha chain family. Homodimer. The RNAP catalytic core consists of 2 alpha, 1 beta, 1 beta' and 1 omega subunit. When a sigma factor is associated with the core the holoenzyme is formed, which can initiate transcription.

The catalysed reaction is RNA(n) + a ribonucleoside 5'-triphosphate = RNA(n+1) + diphosphate. Its function is as follows. DNA-dependent RNA polymerase catalyzes the transcription of DNA into RNA using the four ribonucleoside triphosphates as substrates. The sequence is that of DNA-directed RNA polymerase subunit alpha from Chlamydia pneumoniae (Chlamydophila pneumoniae).